The primary structure comprises 284 residues: Tropomyosin Per a 7.0101 (284 aa).

Residues 22–266 are a coiled coil; the sequence is ALLCEQQARD…EDELVHEKEK (245 aa).

The protein belongs to the tropomyosin family. Homodimer.

Tropomyosin, in association with the troponin complex, plays a central role in the calcium dependent regulation of muscle contraction. The protein is Tropomyosin Per a 7.0101 of Periplaneta americana (American cockroach).